Here is a 480-residue protein sequence, read N- to C-terminus: Ciliated left-right organizer protein containing ZP-N domains homolog (480 aa).

Residues 1 to 23 form the signal peptide; that stretch reads MKNQHNTFWVLCLLFVMFDETFS.

In terms of tissue distribution, expressed specifically by cells of the ciliated left-right organizer.

The protein resides in the secreted. In Xenopus tropicalis (Western clawed frog), this protein is Ciliated left-right organizer protein containing ZP-N domains homolog.